A 323-amino-acid polypeptide reads, in one-letter code: Fructose-bisphosphate aldolase (323 aa).

Position 50 (serine 50) interacts with beta-D-fructose 1,6-bisphosphate. The active-site Proton donor is the aspartate 83. Positions 84 and 178 each coordinate Zn(2+). The beta-D-fructose 1,6-bisphosphate site is built by histidine 178, glycine 179, and lysine 182. Residue histidine 210 coordinates Zn(2+). Glycine 211, serine 213, asparagine 253, aspartate 255, serine 256, arginine 259, and arginine 280 together coordinate beta-D-fructose 1,6-bisphosphate.

It belongs to the class II fructose-bisphosphate aldolase family. Homodimer. Requires Zn(2+) as cofactor.

The catalysed reaction is beta-D-fructose 1,6-bisphosphate = D-glyceraldehyde 3-phosphate + dihydroxyacetone phosphate. It participates in carbohydrate degradation; glycolysis; D-glyceraldehyde 3-phosphate and glycerone phosphate from D-glucose: step 4/4. Its function is as follows. Plays a key role in glycolysis by catalyzing the cleavage of fructose 1,6-bisphosphate into dihydroxyacetone phosphate and glyceraldehyde 3-phosphate. Does not cleave D-tagatose-1,6-bisphosphate. The polypeptide is Fructose-bisphosphate aldolase (Giardia intestinalis (strain ATCC 50803 / WB clone C6) (Giardia lamblia)).